A 621-amino-acid chain; its full sequence is Chaperone protein HtpG (621 aa).

Residues 1–328 (MKQEKKKFDA…SEDLPLNISR (328 aa)) are a; substrate-binding. The b stretch occupies residues 329–544 (ESLQHNNVLE…EAAMDIRMER (216 aa)). Residues 478 to 498 (DVDQATSSSEEKNKDDKKSDD) form a disordered region. A compositionally biased stretch (basic and acidic residues) spans 486–498 (SEEKNKDDKKSDD). The c stretch occupies residues 545 to 621 (FLIEQKQIAN…LNDIVQKAIL (77 aa)).

This sequence belongs to the heat shock protein 90 family. Homodimer.

The protein localises to the cytoplasm. Molecular chaperone. Has ATPase activity. The polypeptide is Chaperone protein HtpG (Rickettsia bellii (strain RML369-C)).